A 208-amino-acid polypeptide reads, in one-letter code: 3-demethoxyubiquinol 3-hydroxylase (208 aa).

Fe cation-binding residues include Glu57, Glu87, His90, Glu139, Glu171, and His174.

It belongs to the COQ7 family. Fe cation serves as cofactor.

It localises to the cell membrane. The enzyme catalyses a 5-methoxy-2-methyl-3-(all-trans-polyprenyl)benzene-1,4-diol + AH2 + O2 = a 3-demethylubiquinol + A + H2O. The protein operates within cofactor biosynthesis; ubiquinone biosynthesis. Catalyzes the hydroxylation of 2-nonaprenyl-3-methyl-6-methoxy-1,4-benzoquinol during ubiquinone biosynthesis. The chain is 3-demethoxyubiquinol 3-hydroxylase from Herbaspirillum seropedicae.